The following is a 187-amino-acid chain: Adenylate kinase (187 aa).

10 to 15 is an ATP binding site; the sequence is GSGKGT. Residues 30–59 are NMP; that stretch reads STGDLLRAEVAAGSPLGLKAKEVMARGDLV. AMP is bound by residues threonine 31, arginine 36, 57–59, 85–88, and glutamine 92; these read DLV and GYPR. The segment at 126–136 is LID; sequence GRAKAEGREDD. ATP is bound at residue arginine 127. The AMP site is built by arginine 133 and arginine 144. Glycine 172 contributes to the ATP binding site.

This sequence belongs to the adenylate kinase family. As to quaternary structure, monomer.

It localises to the cytoplasm. The enzyme catalyses AMP + ATP = 2 ADP. The protein operates within purine metabolism; AMP biosynthesis via salvage pathway; AMP from ADP: step 1/1. Catalyzes the reversible transfer of the terminal phosphate group between ATP and AMP. Plays an important role in cellular energy homeostasis and in adenine nucleotide metabolism. The protein is Adenylate kinase of Xanthomonas campestris pv. campestris (strain 8004).